A 465-amino-acid polypeptide reads, in one-letter code: Cerebellar degeneration-related protein 2-like (465 aa).

Coiled-coil stretches lie at residues 38 to 143 (LLER…EQLR) and 188 to 265 (LEQE…TYLL). The segment at 282 to 314 (APEADDPQPGRGDDLGAQDGVSSPAASPGHVVR) is disordered. Phosphoserine occurs at positions 308, 318, and 344. The stretch at 350-377 (MSILREVDEQYHALLEKYEELLSKCRQH) forms a coiled coil. Residues 382–417 (RHAGVQTSRPISRDSSWRDLRGGEEGQGEVKAGEKS) form a disordered region. Positions 392–405 (ISRDSSWRDLRGGE) are enriched in basic and acidic residues.

The protein belongs to the CDR2 family.

In Homo sapiens (Human), this protein is Cerebellar degeneration-related protein 2-like (CDR2L).